A 458-amino-acid polypeptide reads, in one-letter code: Argininosuccinate lyase (458 aa).

Belongs to the lyase 1 family. Argininosuccinate lyase subfamily.

The protein localises to the cytoplasm. The catalysed reaction is 2-(N(omega)-L-arginino)succinate = fumarate + L-arginine. It participates in amino-acid biosynthesis; L-arginine biosynthesis; L-arginine from L-ornithine and carbamoyl phosphate: step 3/3. The chain is Argininosuccinate lyase from Geobacter metallireducens (strain ATCC 53774 / DSM 7210 / GS-15).